We begin with the raw amino-acid sequence, 356 residues long: Dual-specificity RNA methyltransferase RlmN (356 aa).

E89 (proton acceptor) is an active-site residue. The region spanning 108–341 (KHARYTICVS…CTIRESKGLD (234 aa)) is the Radical SAM core domain. C115 and C346 are oxidised to a cystine. [4Fe-4S] cluster contacts are provided by C122, C126, and C129. S-adenosyl-L-methionine-binding positions include 172 to 173 (GE), S204, 227 to 229 (SLH), and N303. C346 acts as the S-methylcysteine intermediate in catalysis.

It belongs to the radical SAM superfamily. RlmN family. It depends on [4Fe-4S] cluster as a cofactor.

Its subcellular location is the cytoplasm. It catalyses the reaction adenosine(2503) in 23S rRNA + 2 reduced [2Fe-2S]-[ferredoxin] + 2 S-adenosyl-L-methionine = 2-methyladenosine(2503) in 23S rRNA + 5'-deoxyadenosine + L-methionine + 2 oxidized [2Fe-2S]-[ferredoxin] + S-adenosyl-L-homocysteine. It carries out the reaction adenosine(37) in tRNA + 2 reduced [2Fe-2S]-[ferredoxin] + 2 S-adenosyl-L-methionine = 2-methyladenosine(37) in tRNA + 5'-deoxyadenosine + L-methionine + 2 oxidized [2Fe-2S]-[ferredoxin] + S-adenosyl-L-homocysteine. Specifically methylates position 2 of adenine 2503 in 23S rRNA and position 2 of adenine 37 in tRNAs. m2A2503 modification seems to play a crucial role in the proofreading step occurring at the peptidyl transferase center and thus would serve to optimize ribosomal fidelity. This chain is Dual-specificity RNA methyltransferase RlmN, found in Campylobacter lari (strain RM2100 / D67 / ATCC BAA-1060).